Consider the following 450-residue polypeptide: uncharacterized protein (450 aa).

The TRAM domain occupies 1-58 (MAKGEIVTVKIEEMDFKGYGVGYCEGKPLKVRGGILGQRVAVRVKKGKKGRAEGEIVE). Residues Cys-71, Cys-77, Cys-80, and Cys-159 each coordinate [4Fe-4S] cluster. Gln-285, Tyr-314, Glu-335, and Asp-380 together coordinate S-adenosyl-L-methionine. Cys-407 (nucleophile) is an active-site residue.

This sequence belongs to the class I-like SAM-binding methyltransferase superfamily. RNA M5U methyltransferase family.

This is an uncharacterized protein from Caldanaerobacter subterraneus subsp. tengcongensis (strain DSM 15242 / JCM 11007 / NBRC 100824 / MB4) (Thermoanaerobacter tengcongensis).